We begin with the raw amino-acid sequence, 275 residues long: MPELPEVETVRRGLETLVLGQEIVAVTLKVPKMVKTDLETFALTLPGQIIQSVGRRGKYLLIDLGQLVLVSHLRMEGKYLLFPDEVPDNKHFHVFFELKNGSTLVYQDVRKFGTFDLIAKSQLSAFFAKRKLGPEPKKETFKLKTFEAALLSSQKPIKPHLLDQTLVAGLGNIYVDEVLWAAKVHPGTASSRLNKAEIKRLHDETIRILALGIEKGGSTVRTYRNALGADGTMQDYLQVYGQTGKPCPRCGQAIVKLKVGGRGTHICPKCQKKRP.

Catalysis depends on P2, which acts as the Schiff-base intermediate with DNA. The Proton donor role is filled by E3. Catalysis depends on K58, which acts as the Proton donor; for beta-elimination activity. Positions 91 and 110 each coordinate DNA. The FPG-type zinc-finger motif lies at 238–272; the sequence is QVYGQTGKPCPRCGQAIVKLKVGGRGTHICPKCQK. The active-site Proton donor; for delta-elimination activity is R262.

The protein belongs to the FPG family. Monomer. The cofactor is Zn(2+).

It carries out the reaction Hydrolysis of DNA containing ring-opened 7-methylguanine residues, releasing 2,6-diamino-4-hydroxy-5-(N-methyl)formamidopyrimidine.. The enzyme catalyses 2'-deoxyribonucleotide-(2'-deoxyribose 5'-phosphate)-2'-deoxyribonucleotide-DNA = a 3'-end 2'-deoxyribonucleotide-(2,3-dehydro-2,3-deoxyribose 5'-phosphate)-DNA + a 5'-end 5'-phospho-2'-deoxyribonucleoside-DNA + H(+). Functionally, involved in base excision repair of DNA damaged by oxidation or by mutagenic agents. Acts as a DNA glycosylase that recognizes and removes damaged bases. Has a preference for oxidized purines, such as 7,8-dihydro-8-oxoguanine (8-oxoG). Has AP (apurinic/apyrimidinic) lyase activity and introduces nicks in the DNA strand. Cleaves the DNA backbone by beta-delta elimination to generate a single-strand break at the site of the removed base with both 3'- and 5'-phosphates. This Streptococcus pyogenes serotype M28 (strain MGAS6180) protein is Formamidopyrimidine-DNA glycosylase.